A 378-amino-acid chain; its full sequence is Probable dihydroorotase-like protein (378 aa).

This sequence belongs to the metallo-dependent hydrolases superfamily. DHOase family. PyrC' subfamily.

Functionally, non-functional DHOase. In Helicobacter pylori (strain ATCC 700392 / 26695) (Campylobacter pylori), this protein is Probable dihydroorotase-like protein (pyrC').